A 145-amino-acid polypeptide reads, in one-letter code: 3-dehydroquinate dehydratase (145 aa).

The active-site Proton acceptor is Tyr22. Substrate contacts are provided by Asn74, His80, and Asp87. The active-site Proton donor is His100. Substrate contacts are provided by residues Ile101–Ser102 and Arg111.

The protein belongs to the type-II 3-dehydroquinase family. As to quaternary structure, homododecamer.

It carries out the reaction 3-dehydroquinate = 3-dehydroshikimate + H2O. It functions in the pathway metabolic intermediate biosynthesis; chorismate biosynthesis; chorismate from D-erythrose 4-phosphate and phosphoenolpyruvate: step 3/7. Catalyzes a trans-dehydration via an enolate intermediate. The sequence is that of 3-dehydroquinate dehydratase from Lachnoclostridium phytofermentans (strain ATCC 700394 / DSM 18823 / ISDg) (Clostridium phytofermentans).